An 83-amino-acid polypeptide reads, in one-letter code: Cytotoxin homolog 5V (83 aa).

The signal sequence occupies residues 1-21 (MKTLLLTLVVVTIVCLDLGYT). Intrachain disulfides connect Cys-24/Cys-43, Cys-36/Cys-61, Cys-65/Cys-76, and Cys-77/Cys-82.

Belongs to the three-finger toxin family. Short-chain subfamily. Orphan group XV sub-subfamily. In terms of tissue distribution, expressed by the venom gland.

The protein localises to the secreted. It is found in the target cell membrane. Functionally, has low cytotoxic activity. The chain is Cytotoxin homolog 5V from Naja atra (Chinese cobra).